The primary structure comprises 392 residues: Aminomethyltransferase, mitochondrial (392 aa).

The transit peptide at 1-16 directs the protein to the mitochondrion; sequence MLRAGCRAALARRHLS. Substrate is bound by residues glutamate 221, arginine 250, and tyrosine 388.

It belongs to the GcvT family. In terms of assembly, the glycine cleavage system is composed of four proteins: P, T, L and H.

Its subcellular location is the mitochondrion. The catalysed reaction is N(6)-[(R)-S(8)-aminomethyldihydrolipoyl]-L-lysyl-[protein] + (6S)-5,6,7,8-tetrahydrofolate = N(6)-[(R)-dihydrolipoyl]-L-lysyl-[protein] + (6R)-5,10-methylene-5,6,7,8-tetrahydrofolate + NH4(+). In terms of biological role, the glycine cleavage system catalyzes the degradation of glycine. The protein is Aminomethyltransferase, mitochondrial of Gallus gallus (Chicken).